Consider the following 168-residue polypeptide: Crossover junction endodeoxyribonuclease RuvC (168 aa).

Active-site residues include Asp-7, Glu-66, and Asp-138. Residues Asp-7, Glu-66, and Asp-138 each contribute to the Mg(2+) site.

This sequence belongs to the RuvC family. In terms of assembly, homodimer which binds Holliday junction (HJ) DNA. The HJ becomes 2-fold symmetrical on binding to RuvC with unstacked arms; it has a different conformation from HJ DNA in complex with RuvA. In the full resolvosome a probable DNA-RuvA(4)-RuvB(12)-RuvC(2) complex forms which resolves the HJ. Mg(2+) serves as cofactor.

It localises to the cytoplasm. The enzyme catalyses Endonucleolytic cleavage at a junction such as a reciprocal single-stranded crossover between two homologous DNA duplexes (Holliday junction).. Functionally, the RuvA-RuvB-RuvC complex processes Holliday junction (HJ) DNA during genetic recombination and DNA repair. Endonuclease that resolves HJ intermediates. Cleaves cruciform DNA by making single-stranded nicks across the HJ at symmetrical positions within the homologous arms, yielding a 5'-phosphate and a 3'-hydroxyl group; requires a central core of homology in the junction. The consensus cleavage sequence is 5'-(A/T)TT(C/G)-3'. Cleavage occurs on the 3'-side of the TT dinucleotide at the point of strand exchange. HJ branch migration catalyzed by RuvA-RuvB allows RuvC to scan DNA until it finds its consensus sequence, where it cleaves and resolves the cruciform DNA. In Cereibacter sphaeroides (strain ATCC 17023 / DSM 158 / JCM 6121 / CCUG 31486 / LMG 2827 / NBRC 12203 / NCIMB 8253 / ATH 2.4.1.) (Rhodobacter sphaeroides), this protein is Crossover junction endodeoxyribonuclease RuvC.